A 443-amino-acid polypeptide reads, in one-letter code: FLYWCH-type zinc finger-containing protein peb-1 (443 aa).

Positions 22–49 are disordered; the sequence is KPGSSDISSSSTDTSAISPISVSSMPLS. A compositionally biased stretch (low complexity) spans 25-42; it reads SSDISSSSTDTSAISPIS. Positions 46 to 203 form a DNA-binding region, required for DNA-binding; it reads MPLSPDKEKK…RNKDGKPKKP (158 aa). The FLYWCH-type zinc finger occupies 69–135; it reads IVTSFKGYQK…NACTKGSHNH (67 aa). Residues 251–271 are disordered; that stretch reads PTIQIPQPIPTPIQHQQQEQS.

The protein localises to the nucleus. Functionally, putative transcription factor. Binds to specific sequence motif 5'-[TC][AGT]TGCC[GA][AT]-3' in regulatory elements of target genes such as myosin myo-2. May modulate gene expression, perhaps acting in opposition to transcription factor pha-4. Involved in morphogenesis, perhaps especially in formation of the pharynx. Plays roles in molting, feeding and morphology. This Caenorhabditis elegans protein is FLYWCH-type zinc finger-containing protein peb-1.